The following is a 186-amino-acid chain: NADH-dependent FMN reductase SfnF (186 aa).

Belongs to the SsuE family.

It carries out the reaction FMNH2 + NAD(+) = FMN + NADH + 2 H(+). Functionally, involved in the dimethyl sulfide degradation pathway. Catalyzes the NADH-dependent reduction of FMN. This is NADH-dependent FMN reductase SfnF from Pseudomonas putida (Arthrobacter siderocapsulatus).